The following is a 158-amino-acid chain: Large ribosomal subunit protein uL15 (158 aa).

Belongs to the universal ribosomal protein uL15 family. Part of the 50S ribosomal subunit.

Its function is as follows. Binds to the 23S rRNA. The chain is Large ribosomal subunit protein uL15 from Aeropyrum pernix (strain ATCC 700893 / DSM 11879 / JCM 9820 / NBRC 100138 / K1).